A 1321-amino-acid chain; its full sequence is Insulin receptor substrate 2 (1321 aa).

Residues 1 to 10 (MASAPLPGPP) are compositionally biased toward pro residues. Disordered regions lie at residues 1-32 (MASA…HSVR) and 51-73 (RGPG…PPRL). One can recognise a PH domain in the interval 16–144 (DGPNLNNNNN…WYRALTDLVS (129 aa)). The segment covering 18–28 (PNLNNNNNNNN) has biased composition (low complexity). An IRS-type PTB domain is found at 191 to 295 (YREVWQVNLK…EAMKALKELF (105 aa)). A disordered region spans residues 299–536 (PRSKSQSSGS…ARDGSGGELY (238 aa)). Residues Ser-303 and Ser-343 each carry the phosphoserine modification. A Phosphothreonine modification is found at Thr-347. The residue at position 362 (Ser-362) is a Phosphoserine. The segment covering 364-376 (GDGGAAGGAGTAG) has biased composition (gly residues). A phosphoserine mark is found at Ser-381, Ser-385, and Ser-388. Arg-409 is subject to Omega-N-methylarginine. 2 stretches are compositionally biased toward low complexity: residues 435–456 (SPPA…SGSY) and 478–490 (PSSG…GSPS). Thr-517 is subject to Phosphothreonine. Ser-520 bears the Phosphoserine mark. The residue at position 524 (Thr-524) is a Phosphothreonine. Tyr-536 is modified (phosphotyrosine; by INSR). A YXXM motif 1 motif is present at residues 536–539 (YGYM). The residue at position 556 (Ser-556) is a Phosphoserine; by PLK1. Phosphoserine is present on Ser-573. Phosphothreonine occurs at positions 575 and 576. Position 590 is a phosphoserine (Ser-590). The YXXM motif 2 signature appears at 594-597 (YTLM). Ser-604 and Ser-616 each carry phosphoserine. Tyr-649 carries the phosphotyrosine modification. 2 consecutive short sequence motifs (YXXM motif) follow at residues 649-652 (YMPM) and 671-674 (YMPM). Residue Tyr-671 is modified to Phosphotyrosine; by INSR. Residues Ser-675, Ser-678, Ser-727, and Ser-728 each carry the phosphoserine modification. Positions 734-737 (YMRM) match the YXXM motif 5 motif. Ser-762 carries the phosphoserine modification. Phosphothreonine is present on Thr-771. At Ser-796 the chain carries Phosphoserine. Residues 814–817 (YVLM) carry the YXXM motif 6 motif. A Phosphoserine modification is found at Ser-819. 2 disordered regions span residues 834–871 (ATPG…RPEG) and 888–1091 (EGLQ…ASPT). Position 907 is a phosphoserine (Ser-907). The residue at position 911 (Tyr-911) is a Phosphotyrosine; by INSR. Positions 930–959 (LLASAASSSSLLSASSPASSLGSGTPGTSS) are enriched in low complexity. The residue at position 965 (Ser-965) is a Phosphoserine. A Phosphotyrosine; by INSR modification is found at Tyr-970. The span at 1005–1014 (PYPPLPPRPS) shows a compositional bias: pro residues. Residues 1039–1055 (AATSQGPTAGSSMSSEP) show a composition bias toward polar residues. Residues 1061-1064 (YTEM) carry the YXXM motif 7 motif. Thr-1071 is modified (phosphothreonine). Positions 1072–1082 (PPQPIVAPPKP) are enriched in pro residues. The residue at position 1089 (Ser-1089) is a Phosphoserine. Ser-1098 carries the post-translational modification Phosphoserine; by PLK1. The disordered stretch occupies residues 1110 to 1198 (LQVSQPPDPH…TSPGQAQPLV (89 aa)). Over residues 1139 to 1154 (ETFSSTTTVTPVSPSF) the composition is skewed to low complexity. The residue at position 1148 (Thr-1148) is a Phosphothreonine. Phosphoserine is present on residues Ser-1151, Ser-1163, Ser-1165, Ser-1175, and Ser-1190. Residues 1163–1179 (SASVENVSLRKSSEGSS) are compositionally biased toward polar residues. A Phosphotyrosine; by INSR modification is found at Tyr-1242. The interval 1251 to 1275 (QGSLAQSQPQPGDKNSWSRTRSLGG) is disordered. Residues 1253–1271 (SLAQSQPQPGDKNSWSRTR) show a composition bias toward polar residues. Tyr-1303 carries the post-translational modification Phosphotyrosine; by INSR. Lys-1314 is covalently cross-linked (Glycyl lysine isopeptide (Lys-Gly) (interchain with G-Cter in ubiquitin)).

In terms of assembly, interacts with PHIP. Interacts with SH2B1; this interaction enhances leptin-induced activation of the PI3-kinase pathway. Interacts with GRB2. Interacts with PIK3R1. Interacts with DVL2; this interaction promotes the Wnt/beta-catenin signaling pathway. In terms of processing, phosphorylation fluctuates in a cell-cycle dependent manner with hyperphosphorylation during mitosis. Phosphorylated at Ser-556 and Ser-1098 by PLK1; these phosphorylations prevent the activation of the PI3K pathway upon growth factor stimulation by inhibiting the binding between IRS2 and the PI3K pathway components and increasing the level of IRS2 protein degradation. In addition, they prevent premature mitotic exit. Monoubiquitinated by NEDD4; leading to enhanced IGF1 signaling. During cell cycle, ubiquitination and proteasomal degradation are controlled by FZR1. Skeletal muscle, lung, brain, liver, kidney, heart and spleen.

It localises to the cytoplasm. It is found in the cytosol. Signaling adapter protein that participates in the signal transduction from two prominent receptor tyrosine kinases, insulin receptor/INSR and insulin-like growth factor I receptor/IGF1R. Plays therefore an important role in development, growth, glucose homeostasis as well as lipid metabolism. Upon phosphorylation by the insulin receptor, functions as a signaling scaffold that propagates insulin action through binding to SH2 domain-containing proteins including the p85 regulatory subunit of PI3K, NCK1, NCK2, GRB2 or SHP2. Recruitment of GRB2 leads to the activation of the guanine nucleotide exchange factor SOS1 which in turn triggers the Ras/Raf/MEK/MAPK signaling cascade. Activation of the PI3K/AKT pathway is responsible for most of insulin metabolic effects in the cell, and the Ras/Raf/MEK/MAPK is involved in the regulation of gene expression and in cooperation with the PI3K pathway regulates cell growth and differentiation. Acts a positive regulator of the Wnt/beta-catenin signaling pathway through suppression of DVL2 autophagy-mediated degradation leading to cell proliferation. Plays a role in cell cycle progression by promoting a robust spindle assembly checkpoint (SAC) during M-phase. In macrophages, IL4-induced tyrosine phosphorylation of IRS2 leads to the recruitment and activation of phosphoinositide 3-kinase (PI3K). The chain is Insulin receptor substrate 2 (Irs2) from Mus musculus (Mouse).